Reading from the N-terminus, the 586-residue chain is Asparagine synthetase [glutamine-hydrolyzing] (586 aa).

Catalysis depends on Cys2, which acts as the For GATase activity. The Glutamine amidotransferase type-2 domain maps to 2 to 185 (CGILAVLGVV…PGHLYSSKTG (184 aa)). L-glutamine is bound by residues 50–54 (RLAII), 75–77 (NGE), and Asp98. An Asparagine synthetase domain is found at 193–516 (PPWFSETVPS…PQDSARETVP (324 aa)). ATP contacts are provided by residues Leu231, Ile267, and 341–342 (SG).

The catalysed reaction is L-aspartate + L-glutamine + ATP + H2O = L-asparagine + L-glutamate + AMP + diphosphate + H(+). It functions in the pathway amino-acid biosynthesis; L-asparagine biosynthesis; L-asparagine from L-aspartate (L-Gln route): step 1/1. Essential for nitrogen assimilation, distribution and remobilization within the plant via the phloem. This Zea mays (Maize) protein is Asparagine synthetase [glutamine-hydrolyzing] (ASN1).